The sequence spans 207 residues: Octanoyltransferase (207 aa).

The 177-residue stretch at 27–203 folds into the BPL/LPL catalytic domain; sequence ADTEDELWVV…HLETQLTPKA (177 aa). Residues 66–73, 133–135, and 146–148 contribute to the substrate site; these read RGGQITYH, SLG, and GLA. The active-site Acyl-thioester intermediate is the C164.

The protein belongs to the LipB family.

Its subcellular location is the cytoplasm. The enzyme catalyses octanoyl-[ACP] + L-lysyl-[protein] = N(6)-octanoyl-L-lysyl-[protein] + holo-[ACP] + H(+). It participates in protein modification; protein lipoylation via endogenous pathway; protein N(6)-(lipoyl)lysine from octanoyl-[acyl-carrier-protein]: step 1/2. Catalyzes the transfer of endogenously produced octanoic acid from octanoyl-acyl-carrier-protein onto the lipoyl domains of lipoate-dependent enzymes. Lipoyl-ACP can also act as a substrate although octanoyl-ACP is likely to be the physiological substrate. The chain is Octanoyltransferase from Neisseria gonorrhoeae (strain ATCC 700825 / FA 1090).